A 455-amino-acid chain; its full sequence is tRNA modification GTPase MnmE (455 aa).

Residues arginine 24, glutamate 81, and lysine 120 each coordinate (6S)-5-formyl-5,6,7,8-tetrahydrofolate. A TrmE-type G domain is found at 216 to 378 (GMTVVIAGRP…LREHLKACMG (163 aa)). Asparagine 226 contributes to the K(+) binding site. Residues 226–231 (NAGKSS), 245–251 (TDIAGTT), 270–273 (DTAG), 335–338 (NKAD), and 359–361 (SAR) contribute to the GTP site. Serine 230 lines the Mg(2+) pocket. K(+)-binding residues include threonine 245, isoleucine 247, and threonine 250. Threonine 251 contacts Mg(2+). Position 455 (lysine 455) interacts with (6S)-5-formyl-5,6,7,8-tetrahydrofolate.

Belongs to the TRAFAC class TrmE-Era-EngA-EngB-Septin-like GTPase superfamily. TrmE GTPase family. As to quaternary structure, homodimer. Heterotetramer of two MnmE and two MnmG subunits. K(+) is required as a cofactor.

The protein resides in the cytoplasm. Exhibits a very high intrinsic GTPase hydrolysis rate. Involved in the addition of a carboxymethylaminomethyl (cmnm) group at the wobble position (U34) of certain tRNAs, forming tRNA-cmnm(5)s(2)U34. The protein is tRNA modification GTPase MnmE of Pseudomonas paraeruginosa (strain DSM 24068 / PA7) (Pseudomonas aeruginosa (strain PA7)).